Reading from the N-terminus, the 336-residue chain is Phospho-N-acetylmuramoyl-pentapeptide-transferase (336 aa).

The next 10 helical transmembrane spans lie at Leu3–Ile23, Met52–Leu72, Asn79–Leu99, Leu123–Asn143, Ile144–Val164, Gly175–Ala195, Phe201–Asn221, Val227–Ala247, Leu255–Phe275, and Val315–Tyr335.

The protein belongs to the glycosyltransferase 4 family. MraY subfamily. Mg(2+) serves as cofactor.

The protein localises to the cell membrane. The catalysed reaction is UDP-N-acetyl-alpha-D-muramoyl-L-alanyl-gamma-D-glutamyl-L-lysyl-D-alanyl-D-alanine + di-trans,octa-cis-undecaprenyl phosphate = Mur2Ac(oyl-L-Ala-gamma-D-Glu-L-Lys-D-Ala-D-Ala)-di-trans,octa-cis-undecaprenyl diphosphate + UMP. It functions in the pathway cell wall biogenesis; peptidoglycan biosynthesis. Its function is as follows. Catalyzes the initial step of the lipid cycle reactions in the biosynthesis of the cell wall peptidoglycan: transfers peptidoglycan precursor phospho-MurNAc-pentapeptide from UDP-MurNAc-pentapeptide onto the lipid carrier undecaprenyl phosphate, yielding undecaprenyl-pyrophosphoryl-MurNAc-pentapeptide, known as lipid I. This is Phospho-N-acetylmuramoyl-pentapeptide-transferase from Streptococcus agalactiae serotype Ia (strain ATCC 27591 / A909 / CDC SS700).